Here is a 271-residue protein sequence, read N- to C-terminus: MANFTAADVKRLRELTGAGMLACKNALAETDGDFDKAVEALRIKGAKDVGKRAERATAEGLVAAKDGALIELNCETDFVAKNAEFQTLADQVVAAAAAAKPADVDALKGASIGDKTVEQAIAELSAKIGEKLELRRVAIFDGTVEAYLHRRSADLPPAVGVLVEYRGDDAAAAHAVALQIAALRARYLSRDDVPEDIVASERRIAEETARAEGKPEQALPKIVEGRLNGFFKDAVLLEQASVSDNKKTVKALLDVAGVMVTRFVRFEVGQA.

An involved in Mg(2+) ion dislocation from EF-Tu region spans residues 76 to 79 (TDFV).

The protein belongs to the EF-Ts family.

The protein localises to the cytoplasm. Associates with the EF-Tu.GDP complex and induces the exchange of GDP to GTP. It remains bound to the aminoacyl-tRNA.EF-Tu.GTP complex up to the GTP hydrolysis stage on the ribosome. The chain is Elongation factor Ts from Mycobacterium bovis (strain BCG / Pasteur 1173P2).